The chain runs to 201 residues: Protein S40-5 (201 aa).

2 disordered regions span residues M1 to E39 and S134 to G178. Positions G17 to S29 are enriched in low complexity.

The protein belongs to the senescence regulator S40 family.

The protein resides in the cytoplasm. In Arabidopsis thaliana (Mouse-ear cress), this protein is Protein S40-5.